Reading from the N-terminus, the 129-residue chain is Large ribosomal subunit protein bL17 (129 aa).

This sequence belongs to the bacterial ribosomal protein bL17 family. In terms of assembly, part of the 50S ribosomal subunit. Contacts protein L32.

This Thiobacillus denitrificans (strain ATCC 25259 / T1) protein is Large ribosomal subunit protein bL17.